The primary structure comprises 374 residues: Putative F-box protein At3g16590 (374 aa).

The F-box domain maps to 1–45 (MPTKLPLELEDEILLRVPPLSLTRFRTVCKRWNTLFNDQRFINNH).

The protein is Putative F-box protein At3g16590 of Arabidopsis thaliana (Mouse-ear cress).